Consider the following 266-residue polypeptide: Protein phosphatase 1 regulatory subunit 35 (266 aa).

Positions 1–10 are enriched in polar residues; the sequence is MMVYNGSQLE. A disordered region spans residues 1–118; sequence MMVYNGSQLE…QDLGTPVQQS (118 aa). The segment covering 21 to 38 has biased composition (pro residues); it reads PGPPPEPRAPEPGAPVPE. A phosphoserine mark is found at Ser-46 and Ser-51. Residues 62–79 are compositionally biased toward basic residues; that stretch reads GRRKGRADRRGGARKGRQ. Positions 86–97 are enriched in pro residues; it reads PPSPVRSGPPPA.

It belongs to the PPP1R35 family. In terms of assembly, interacts with PPP1CA; this interaction mediates the PPP1CA phosphatase activity inhibition. Interacts with RTTN; this interaction allows the mutual recruitment to the centriole.

It localises to the cytoplasm. The protein resides in the cytoskeleton. It is found in the microtubule organizing center. The protein localises to the centrosome. Its subcellular location is the centriole. Functionally, during centriole duplication, plays a role in the centriole elongation by promoting the recruitment of the microtubule-binding elongation machinery through its interaction with RTTN, leading to the centriole to centrosome conversion. In addition may play a role in the primary cilia assembly. The polypeptide is Protein phosphatase 1 regulatory subunit 35 (Bos taurus (Bovine)).